The chain runs to 392 residues: Obg-like ATPase 1 (392 aa).

The OBG-type G domain maps to 21–285; sequence LKTGIVGMPN…FTEEEAIEEC (265 aa). Residue 30–35 coordinates ATP; the sequence is NVGKST. Mg(2+) contacts are provided by S34 and T55. Residue M233 participates in ATP binding. The 84-residue stretch at 306–389 folds into the TGS domain; the sequence is NLINYFTCGE…ESGDIAHWKA (84 aa).

It belongs to the TRAFAC class OBG-HflX-like GTPase superfamily. OBG GTPase family. YchF/OLA1 subfamily. In terms of assembly, monomer. The cofactor is Mg(2+).

The protein localises to the cytoplasm. It localises to the nucleus. In terms of biological role, hydrolyzes ATP, and can also hydrolyze GTP with lower efficiency. Has lower affinity for GTP. Negatively regulates the G2/M transition in the cell cycle. The sequence is that of Obg-like ATPase 1 from Schizosaccharomyces pombe (strain 972 / ATCC 24843) (Fission yeast).